We begin with the raw amino-acid sequence, 90 residues long: Mitochondrial import inner membrane translocase subunit Tim9 (90 aa).

A Twin CX3C motif motif is present at residues 24-48 (CFNSCVNEFGSRTVSGKEESCANNC). 2 disulfides stabilise this stretch: C24–C48 and C28–C44.

This sequence belongs to the small Tim family. In terms of assembly, heterohexamer; composed of 3 copies of tim-9/tin-9.1 and 3 copies of tim-10/tin-10, named soluble 70 kDa complex. The complex associates with the tim-22 component of the TIM22 complex. Interacts with multi-pass transmembrane proteins in transit.

It localises to the mitochondrion inner membrane. Functionally, mitochondrial intermembrane chaperone that participates in the import and insertion of multi-pass transmembrane proteins into the mitochondrial inner membrane. May also be required for the transfer of beta-barrel precursors from the TOM complex to the sorting and assembly machinery (SAM complex) of the outer membrane. Acts as a chaperone-like protein that protects the hydrophobic precursors from aggregation and guide them through the mitochondrial intermembrane space. In Caenorhabditis elegans, this protein is Mitochondrial import inner membrane translocase subunit Tim9 (tin-9.1).